The primary structure comprises 93 residues: Alpha-defensin 2 (93 aa).

A signal peptide spans Met1–Ala19. Residues Asp20–Ser58 constitute a propeptide that is removed on maturation. Residues Gln23–Arg49 are disordered. Cystine bridges form between Cys64-Cys92, Cys66-Cys81, and Cys71-Cys91.

Belongs to the alpha-defensin family. Paneth cells of the small bowel.

The protein localises to the secreted. Has broad-spectrum antimicrobial properties. Has antibacterial activity against the Gram-positive bacterium L.monocytogenes EGD and the Gram-negative bacteria E.coli ML-35p and avirulent S.typhimurium 7953, but not against the mouse-virulent S.typhimurium 14028S. Probably contributes to the antimicrobial barrier function of the small bowel mucosa. The sequence is that of Alpha-defensin 2 (Defa2) from Mus musculus (Mouse).